The primary structure comprises 319 residues: Transcription elongation factor A protein 1 (319 aa).

A TFIIS N-terminal domain is found at 1–78 (MQEIIKCREQ…DKWKQDIEGT (78 aa)). Residues 78-106 (TSATTTSSSSSSSSSTTSTTTTKTASPSE) are compositionally biased toward low complexity. Residues 78 to 146 (TSATTTSSSS…TTPKTSSPPI (69 aa)) form a disordered region. The segment covering 107 to 122 (SLKRKSISEDTSDRPT) has biased composition (basic and acidic residues). The segment covering 133 to 146 (ISPPTTPKTSSPPI) has biased composition (low complexity). One can recognise a TFIIS central domain in the interval 160 to 272 (LRNKTIQLFV…ASMLGQNNEA (113 aa)). The TFIIS-type zinc finger occupies 275–317 (DQFQCGKCKQRKCTYTQLQTRSADEPPTTFVKCCVKGCGNRWR). Zn(2+) contacts are provided by cysteine 279, cysteine 282, cysteine 307, and cysteine 312.

The protein belongs to the TFS-II family.

It localises to the nucleus. In terms of biological role, necessary for efficient RNA polymerase II transcription elongation past template-encoded arresting sites. The arresting sites in DNA have the property of trapping a certain fraction of elongating RNA polymerases that pass through, resulting in locked ternary complexes. Cleavage of the nascent transcript by S-II allows the resumption of elongation from the new 3'-terminus. The protein is Transcription elongation factor A protein 1 (tcea1) of Dictyostelium discoideum (Social amoeba).